The sequence spans 298 residues: Ribosomal RNA small subunit methyltransferase H (298 aa).

Residues 35–37, aspartate 55, phenylalanine 82, aspartate 100, and glutamine 107 contribute to the S-adenosyl-L-methionine site; that span reads GGH.

Belongs to the methyltransferase superfamily. RsmH family.

It is found in the cytoplasm. It catalyses the reaction cytidine(1402) in 16S rRNA + S-adenosyl-L-methionine = N(4)-methylcytidine(1402) in 16S rRNA + S-adenosyl-L-homocysteine + H(+). Functionally, specifically methylates the N4 position of cytidine in position 1402 (C1402) of 16S rRNA. The polypeptide is Ribosomal RNA small subunit methyltransferase H (Chlamydia abortus (strain DSM 27085 / S26/3) (Chlamydophila abortus)).